A 145-amino-acid polypeptide reads, in one-letter code: Sporulation-specific cell division protein Francci3_3418 (145 aa).

It belongs to the SsgA family.

The protein localises to the cell septum. Its function is as follows. Involved in sporulation-specific cell division. This Frankia casuarinae (strain DSM 45818 / CECT 9043 / HFP020203 / CcI3) protein is Sporulation-specific cell division protein Francci3_3418.